The chain runs to 336 residues: Cinnamoyl-CoA reductase 2 (336 aa).

Residues 21–27, Arg46, Lys52, 72–73, 92–94, Tyr165, Lys169, 192–195, and Ser207 contribute to the NADP(+) site; these read GAGGFIA, DL, TAS, and PVVV. Cys158 and Cys166 are oxidised to a cystine. Residue Lys169 is the Proton donor of the active site.

Belongs to the NAD(P)-dependent epimerase/dehydratase family. Dihydroflavonol-4-reductase subfamily. In terms of processing, the formation of a reversible disulfide bond reduces activity by perturbing the positioning of nearby catalytic residues. Mainly expressed in roots and stems, especially at the second internode and, to a lower extent, in leaves and flowers. Localized in vascular elements, with weaker expression in the interfascicular (xylem fiber) region.

It is found in the cytoplasm. It carries out the reaction (E)-coniferaldehyde + NADP(+) + CoA = (E)-feruloyl-CoA + NADPH + H(+). The enzyme catalyses (E)-4-coumaraldehyde + NADP(+) + CoA = (E)-4-coumaroyl-CoA + NADPH + H(+). It catalyses the reaction (E)-sinapaldehyde + NADP(+) + CoA = (E)-sinapoyl-CoA + NADPH + H(+). The catalysed reaction is (E)-cinnamaldehyde + NADP(+) + CoA = (E)-cinnamoyl-CoA + NADPH + H(+). It carries out the reaction (E)-caffeyl aldehyde + NADP(+) + CoA = (E)-caffeoyl-CoA + NADPH + H(+). Its pathway is aromatic compound metabolism; phenylpropanoid biosynthesis. In terms of biological role, involved in the latter stages of lignin biosynthesis. Catalyzes one of the last steps of monolignol biosynthesis, the conversion of cinnamoyl-CoAs into their corresponding cinnamaldehydes. Mediates the conversion of caffeoyl-CoA and coumaroyl-CoA to caffaldehyde and coumaraldehyde, respectively. Also active, with a lower efficiency, toward feruloyl-CoA and sinapoyl-CoA. Involved in the production of floral volatile phenylpropanoids in flowers of fragrant cultivars from cinnamic acid, a common precursor with the anthocyanin biosynthesis pathway involved in flower pigmentation. This Medicago truncatula (Barrel medic) protein is Cinnamoyl-CoA reductase 2.